The primary structure comprises 300 residues: Fructose-bisphosphate aldolase class 1 (300 aa).

E181 (proton acceptor) is an active-site residue. The Schiff-base intermediate with dihydroxyacetone-P role is filled by K218.

Belongs to the class I fructose-bisphosphate aldolase family.

The enzyme catalyses beta-D-fructose 1,6-bisphosphate = D-glyceraldehyde 3-phosphate + dihydroxyacetone phosphate. The protein operates within carbohydrate degradation; glycolysis; D-glyceraldehyde 3-phosphate and glycerone phosphate from D-glucose: step 4/4. This is Fructose-bisphosphate aldolase class 1 (fda) from Synechocystis sp. (strain ATCC 27184 / PCC 6803 / Kazusa).